A 1079-amino-acid chain; its full sequence is Spermatogenesis-associated protein 31G1 (1079 aa).

Disordered stretches follow at residues 97–145 (EVEE…GSEG), 261–281 (EDLEGMAPDPQLLPPPSSPSV), 297–317 (GVLSGAEAPTQSPGTSPLEVL), 331–362 (KMPQAFEPPMPPPCQSPASLSEPRKVSPEGGL), 376–412 (EKPQASESSMPVPCPPLDSLPELQRESSLEDPSRYKP), 506–566 (NLWA…SPPP), 637–678 (VPVF…EQRK), and 840–975 (PHSS…NHPA). Positions 98–113 (VEEEGEEEEEGEDEAS) are enriched in acidic residues. Over residues 336 to 345 (FEPPMPPPCQ) the composition is skewed to pro residues. A compositionally biased stretch (basic and acidic residues) spans 398 to 412 (LQRESSLEDPSRYKP). Low complexity-rich tracts occupy residues 551 to 562 (NSSASRSPSLAL) and 645 to 655 (SSPSSNSVSKS). Over residues 669-678 (PDGEAVEQRK) the composition is skewed to basic and acidic residues. The span at 942 to 951 (AKKREHPRKP) shows a compositional bias: basic residues.

In terms of biological role, dispensable for normal development and fertility. This chain is Spermatogenesis-associated protein 31G1, found in Homo sapiens (Human).